A 68-amino-acid polypeptide reads, in one-letter code: Sec-independent protein translocase protein TatA (68 aa).

The helical transmembrane segment at 1 to 21 (MGSLSIWHWLIVLLIVVLVFG) threads the bilayer. Residues 42–68 (GMNEGAKDGQPPAKDAGRIIDGEADKK) are disordered. Residues 56–68 (DAGRIIDGEADKK) are compositionally biased toward basic and acidic residues.

This sequence belongs to the TatA/E family. In terms of assembly, the Tat system comprises two distinct complexes: a TatABC complex, containing multiple copies of TatA, TatB and TatC subunits, and a separate TatA complex, containing only TatA subunits. Substrates initially bind to the TatABC complex, which probably triggers association of the separate TatA complex to form the active translocon.

It localises to the cell inner membrane. Functionally, part of the twin-arginine translocation (Tat) system that transports large folded proteins containing a characteristic twin-arginine motif in their signal peptide across membranes. TatA could form the protein-conducting channel of the Tat system. The protein is Sec-independent protein translocase protein TatA of Chromobacterium violaceum (strain ATCC 12472 / DSM 30191 / JCM 1249 / CCUG 213 / NBRC 12614 / NCIMB 9131 / NCTC 9757 / MK).